The primary structure comprises 754 residues: Phosphoinositide 3-kinase regulatory subunit 6 (754 aa).

The disordered stretch occupies residues 343 to 363 (ERDLPTGADELPAPGSPEMER).

Heterodimer of a catalytic subunit (PIK3CG) and a regulatory (PIK3R6) subunit. The binding of PIK3R6 to PIK3CG may exclude the binding of PIK3R5 to PIK3CG. Interacts with beta-gamma G protein dimers. Interacts with PDE3B and RAPGEF3; form a signaling complex that regulates phosphatidylinositol 3-kinase gamma in angiogenesis.

Its subcellular location is the cytoplasm. The protein localises to the cell membrane. In terms of biological role, regulatory subunit of the PI3K gamma complex. Acts as an adapter to drive activation of PIK3CG by beta-gamma G protein dimers. The PIK3CG:PIK3R6 heterodimer is much less sensitive to beta-gamma G protein dimers than PIK3CG:PIK3R5 and its membrane recruitment and beta-gamma G protein dimer-dependent activation requires HRAS bound to PIK3CG. Recruits of the PI3K gamma complex to a PDE3B:RAPGEF3 signaling complex involved in angiogenesis; signaling seems to involve RRAS. The sequence is that of Phosphoinositide 3-kinase regulatory subunit 6 (PIK3R6) from Homo sapiens (Human).